A 451-amino-acid polypeptide reads, in one-letter code: F-box/kelch-repeat protein At1g74510 (451 aa).

The F-box domain maps to 93–139 (SSPVTRLDQNALLNCLAHCSLSDFGSIASTNRTFRSLIKDSELYRLR). 5 Kelch repeats span residues 137–188 (RLRR…KESL), 193–236 (ELLV…SLGE), 237–284 (IAVI…FMDG), 286–333 (FYCI…DQAK), and 349–395 (AVVK…GMAF).

The protein is F-box/kelch-repeat protein At1g74510 of Arabidopsis thaliana (Mouse-ear cress).